A 299-amino-acid polypeptide reads, in one-letter code: CRISPR system Cms protein Csm4 (299 aa).

This sequence belongs to the CRISPR-associated Csm4 family. Part of the Csm effector complex that includes at least Cas10(1), Csm2(3), Csm3(5), Csm4(1), Csm5(1) and mature crRNA. The Csm complex is elongated and slightly twisted with a maximal length of 215 Angstroms and a diameter of 75-80 Angstroms. It has been modeled to have a central protein filamant of Csm3 subunits along which the dsRNA helix of paired crRNA and target RNA binds. The filament is capped at one end by Cas10 and Csm4 and at the other end by Csm5; ssDNA is thought to bind to the N-terminal HD domain of Cas10. Csm with a precursor crRNA does not include Csm5, while Cas6, the enzyme probably involved in pre-crRNA processing, is found associated with a subset of the Csm complex.

CRISPR (clustered regularly interspaced short palindromic repeat) is an adaptive immune system that provides protection against mobile genetic elements (viruses, transposable elements and conjugative plasmids). CRISPR clusters contain spacers, sequences complementary to antecedent mobile elements, and target invading nucleic acids. CRISPR clusters are transcribed and processed into CRISPR RNA (crRNA). The type III-A Csm effector complex binds crRNA and acts as a crRNA-guided RNase, DNase and cyclic oligoadenylate synthase; binding of target RNA cognate to the crRNA is required for all activities. In a heterologous host this Csm effector complex restricts ssRNA phage MS2, suggesting it may target RNA viruses in vivo. In terms of biological role, csm functions as a non-specific ssDNase. Base-pairing between crRNA and target RNA to form a ternary Csm complex activates a ssDNase activity; target RNA cleavage suppresses the ssDNase, a temporal control that prevents uncontrolled DNA degradation. Viral RNA transcripts probably tether the Csm complex to the viral genome, recruiting Cas10 ssDNA activity which is able to degrade DNA in the transcription bubble, spatially controlling the DNase activity. Its function is as follows. The subunit probably binds to the 5' handle of the crRNA, helping in discrimination between self- and non-self. The protein is CRISPR system Cms protein Csm4 of Streptococcus thermophilus.